We begin with the raw amino-acid sequence, 562 residues long: Arginine--tRNA ligase (562 aa).

The 'HIGH' region motif lies at 121-131 (PNIAKPISMGH).

Belongs to the class-I aminoacyl-tRNA synthetase family. As to quaternary structure, monomer.

Its subcellular location is the cytoplasm. The catalysed reaction is tRNA(Arg) + L-arginine + ATP = L-arginyl-tRNA(Arg) + AMP + diphosphate. In Lactiplantibacillus plantarum (strain ATCC BAA-793 / NCIMB 8826 / WCFS1) (Lactobacillus plantarum), this protein is Arginine--tRNA ligase.